The primary structure comprises 450 residues: MKVIDQFKNKKVLVLGLAKSGESAARLLDKLGAIVTVNDGKPFEDNPAAQSLLEEGIKVITGGHPLELLDEEFALMVKNPGIPYNNPMIEKALAKGIPVLTEVELAYLISEAPIIGITGSNGKTTTTTMIGEVLTAAGQHGLLSGNIGYPASQVAQTASDKDTLVMELSSFQLMGVQEFHPEIAVITNLMPTHIDYHGSFSEYVAAKWNIQNKMTAADFLVLNFNQDLAKDLTSKTEATVVPFSTLEKVDGAYLEDGQLYFRGEVVMAANEIGVPGSHNVENALATIAVAKLRDVDNQTIKETLSAFGGVKHRLQFVDDIKGVKFYNDSKSTNILATQKALSGFDNSKVVLIAGGLDRGNEFDELVPDITGLKKMVILGQSAERVKRAADKAGVAYVEATDIADATRKAYELATQGDVVLLSPANASWDMYANFEVRGDLFIDTVAELKE.

Residue 119-125 participates in ATP binding; that stretch reads GSNGKTT.

It belongs to the MurCDEF family.

The protein resides in the cytoplasm. The enzyme catalyses UDP-N-acetyl-alpha-D-muramoyl-L-alanine + D-glutamate + ATP = UDP-N-acetyl-alpha-D-muramoyl-L-alanyl-D-glutamate + ADP + phosphate + H(+). The protein operates within cell wall biogenesis; peptidoglycan biosynthesis. Functionally, cell wall formation. Catalyzes the addition of glutamate to the nucleotide precursor UDP-N-acetylmuramoyl-L-alanine (UMA). This is UDP-N-acetylmuramoylalanine--D-glutamate ligase from Streptococcus pneumoniae (strain CGSP14).